The primary structure comprises 145 residues: ATP synthase epsilon chain (145 aa).

Belongs to the ATPase epsilon chain family. F-type ATPases have 2 components, CF(1) - the catalytic core - and CF(0) - the membrane proton channel. CF(1) has five subunits: alpha(3), beta(3), gamma(1), delta(1), epsilon(1). CF(0) has three main subunits: a, b and c.

It localises to the cell inner membrane. In terms of biological role, produces ATP from ADP in the presence of a proton gradient across the membrane. The chain is ATP synthase epsilon chain from Francisella tularensis subsp. holarctica (strain FTNF002-00 / FTA).